The chain runs to 356 residues: MNYRDLTLRERQVLGIIIQSYVVSAMPVGSRTIARNYNLGLSDATIRNVMADLEADGFISQPHTSAGRVPTDKGYRYYVDLIMNVSRIDEEEKRMIDDRFSNRNSELKGTSAEVLGTAARVLGSISRQLAVVLPPRLSNAVFERLDIVQLASSRIMVVIAIQSLFVKTIVMELNAEISRQKIDAVVDVLNERLPGLTLEEIRSTIAQRLSDFKGSEELMNSIVSSADTLFDESSILEQLYVSGTENIVDQPEFKQPEKVRDIITMIEDKFGMARLVDNAVPSALRQVSECEVAISIGTENRTGKAADLTIVSSPYFAGKMIGRVGVMGPKRMNYEHAVRVVNYMAGCLSEALSGNN.

Belongs to the HrcA family.

Its function is as follows. Negative regulator of class I heat shock genes (grpE-dnaK-dnaJ and groELS operons). Prevents heat-shock induction of these operons. This is Heat-inducible transcription repressor HrcA from Chlorobaculum tepidum (strain ATCC 49652 / DSM 12025 / NBRC 103806 / TLS) (Chlorobium tepidum).